The following is a 766-amino-acid chain: 5-methyltetrahydropteroyltriglutamate--homocysteine methyltransferase (766 aa).

Residues 16 to 19 (RELK) and K124 contribute to the 5-methyltetrahydropteroyltri-L-glutamate site. Residues 445-447 (IGS) and E498 contribute to the L-homocysteine site. Residues 445–447 (IGS) and E498 contribute to the L-methionine site. 5-methyltetrahydropteroyltri-L-glutamate contacts are provided by residues 529–530 (RC) and W575. L-homocysteine is bound at residue D613. Residue D613 coordinates L-methionine. E619 contacts 5-methyltetrahydropteroyltri-L-glutamate. Zn(2+) contacts are provided by H655, C657, and E679. H708 serves as the catalytic Proton donor. C740 contacts Zn(2+).

The protein belongs to the vitamin-B12 independent methionine synthase family. Requires Zn(2+) as cofactor.

It catalyses the reaction 5-methyltetrahydropteroyltri-L-glutamate + L-homocysteine = tetrahydropteroyltri-L-glutamate + L-methionine. Its pathway is amino-acid biosynthesis; L-methionine biosynthesis via de novo pathway; L-methionine from L-homocysteine (MetE route): step 1/1. Its function is as follows. Catalyzes the transfer of a methyl group from 5-methyltetrahydrofolate to homocysteine resulting in methionine formation. The sequence is that of 5-methyltetrahydropteroyltriglutamate--homocysteine methyltransferase from Pseudomonas syringae pv. tomato (strain ATCC BAA-871 / DC3000).